The chain runs to 335 residues: Oligopeptide transport ATP-binding protein OppD (335 aa).

Positions 18-267 (LEVNDLRVTF…PVHPYSIGLL (250 aa)) constitute an ABC transporter domain. 54–61 (GESGSGKS) lines the ATP pocket.

This sequence belongs to the ABC transporter superfamily. The complex is composed of two ATP-binding proteins (OppD and OppF), two transmembrane proteins (OppB and OppC) and a solute-binding protein (OppA).

It is found in the cell inner membrane. It carries out the reaction a [peptide](out) + ATP + H2O = a [peptide](in) + ADP + phosphate + H(+). It catalyses the reaction L-alanyl-gamma-D-glutamyl-meso-2,6-diaminopimelate(out) + ATP + H2O = L-alanyl-gamma-D-glutamyl-meso-2,6-diaminopimelate(in) + ADP + phosphate + H(+). In terms of biological role, part of the ABC transporter complex OppABCDF involved in the uptake of oligopeptides, including the cell wall murein tripeptide L-alanyl-gamma-D-glutamyl-meso-diaminopimelate. Responsible for energy coupling to the transport system. Plays an important nutritional role and is involved in the recycling of cell wall peptides. Binds ATP. The protein is Oligopeptide transport ATP-binding protein OppD of Salmonella typhimurium (strain LT2 / SGSC1412 / ATCC 700720).